Consider the following 225-residue polypeptide: Phosphoserine phosphatase (225 aa).

The residue at position 1 (methionine 1) is an N-acetylmethionine. Aspartate 20 functions as the Nucleophile in the catalytic mechanism. Residues aspartate 20 and aspartate 22 each contribute to the Mg(2+) site. Aspartate 20–aspartate 22 is a binding site for L-serine. Aspartate 22 acts as the Proton donor in catalysis. Methionine 52 contacts O-phospho-L-serine. Glycine 53 contributes to the phosphate binding site. Residues serine 109–glycine 111 and lysine 158 contribute to the L-serine site. Residues serine 109–glycine 111 and lysine 158 each bind O-phospho-L-serine. A Mg(2+)-binding site is contributed by aspartate 179. Threonine 182 is a binding site for O-phospho-L-serine. Threonine 182 is a phosphate binding site.

It belongs to the HAD-like hydrolase superfamily. SerB family. Homodimer. The cofactor is Mg(2+).

It is found in the cytoplasm. The protein localises to the cytosol. It catalyses the reaction O-phospho-L-serine + H2O = L-serine + phosphate. The catalysed reaction is O-phospho-D-serine + H2O = D-serine + phosphate. It participates in amino-acid biosynthesis; L-serine biosynthesis; L-serine from 3-phospho-D-glycerate: step 3/3. In terms of biological role, catalyzes the last irreversible step in the biosynthesis of L-serine from carbohydrates, the dephosphorylation of O-phospho-L-serine to L-serine. L-serine can then be used in protein synthesis, to produce other amino acids, in nucleotide metabolism or in glutathione synthesis, or can be racemized to D-serine, a neuromodulator. May also act on O-phospho-D-serine. This Rattus norvegicus (Rat) protein is Phosphoserine phosphatase.